Here is a 343-residue protein sequence, read N- to C-terminus: 4-hydroxy-2-oxovalerate aldolase 2 (343 aa).

Residues 8-260 (ITVHDMSLRD…ETGVDVFAIS (253 aa)) form the Pyruvate carboxyltransferase domain. 16 to 17 (RD) contributes to the substrate binding site. D17 lines the Mn(2+) pocket. H20 serves as the catalytic Proton acceptor. S170 and H199 together coordinate substrate. H199 and H201 together coordinate Mn(2+). Y290 contacts substrate.

It belongs to the 4-hydroxy-2-oxovalerate aldolase family.

The enzyme catalyses (S)-4-hydroxy-2-oxopentanoate = acetaldehyde + pyruvate. The polypeptide is 4-hydroxy-2-oxovalerate aldolase 2 (Burkholderia lata (strain ATCC 17760 / DSM 23089 / LMG 22485 / NCIMB 9086 / R18194 / 383)).